Consider the following 370-residue polypeptide: Molybdenum import ATP-binding protein ModC (370 aa).

One can recognise an ABC transporter domain in the interval 1-232; the sequence is MLDIDVLRQQ…PDIPDFAAQR (232 aa). 30-37 contacts ATP; it reads GRSGAGKT. One can recognise a Mop domain in the interval 292 to 363; it reads MVSVQNILAA…IKAMSLLRDE (72 aa).

Belongs to the ABC transporter superfamily. Molybdate importer (TC 3.A.1.8) family. The complex is composed of two ATP-binding proteins (ModC), two transmembrane proteins (ModB) and a solute-binding protein (ModA).

The protein resides in the cell inner membrane. It catalyses the reaction molybdate(out) + ATP + H2O = molybdate(in) + ADP + phosphate + H(+). Functionally, part of the ABC transporter complex ModABC involved in molybdenum import. Responsible for energy coupling to the transport system. The sequence is that of Molybdenum import ATP-binding protein ModC from Rhodospirillum rubrum (strain ATCC 11170 / ATH 1.1.1 / DSM 467 / LMG 4362 / NCIMB 8255 / S1).